The chain runs to 483 residues: Glutamyl-tRNA(Gln) amidotransferase subunit A (483 aa).

Catalysis depends on charge relay system residues lysine 76 and serine 151. Residue serine 175 is the Acyl-ester intermediate of the active site.

Belongs to the amidase family. GatA subfamily. Heterotrimer of A, B and C subunits.

The enzyme catalyses L-glutamyl-tRNA(Gln) + L-glutamine + ATP + H2O = L-glutaminyl-tRNA(Gln) + L-glutamate + ADP + phosphate + H(+). In terms of biological role, allows the formation of correctly charged Gln-tRNA(Gln) through the transamidation of misacylated Glu-tRNA(Gln) in organisms which lack glutaminyl-tRNA synthetase. The reaction takes place in the presence of glutamine and ATP through an activated gamma-phospho-Glu-tRNA(Gln). The protein is Glutamyl-tRNA(Gln) amidotransferase subunit A of Azotobacter vinelandii (strain DJ / ATCC BAA-1303).